The primary structure comprises 292 residues: Elongation factor Ts (292 aa).

The involved in Mg(2+) ion dislocation from EF-Tu stretch occupies residues 80–83 (TDFV).

This sequence belongs to the EF-Ts family.

The protein resides in the cytoplasm. Its function is as follows. Associates with the EF-Tu.GDP complex and induces the exchange of GDP to GTP. It remains bound to the aminoacyl-tRNA.EF-Tu.GTP complex up to the GTP hydrolysis stage on the ribosome. The protein is Elongation factor Ts of Ralstonia nicotianae (strain ATCC BAA-1114 / GMI1000) (Ralstonia solanacearum).